A 678-amino-acid chain; its full sequence is MTPNEFFSIKYHILAKAELKAYIDKLADYLSQQSYLYHTLDKPIISDSDYDKLFRLLQDLVNDNPQFKPINSVLDRVGGEVLAGFETIKHKKKMTSLANVFSLEELRDFYDKIEYDIELECEPKMDGLAISIFYKNGKFDYAVTRGDGIQGEKVSENVKTIRNVPLKLNTSNPPEELEVRGEIILDKQSFLSLNEYMQTHENKTFANPRNAAAGSIRMLDSKVVAKRPLKLYSYGIGYFSKDFVYPETQFELMQLLQSFGFTISDNMFLAKNFSEVEEYHHKMSHQRADLAYDIDGLVFKVNNIKLQDTIGYTARGPKWAIAYKFPAEEVESEVLNVEFQVGRTGAITPVARLKPVAVGGVIVSNATLHNINEIKSKDIRVGDRVIVRRAGDVIPEVVKSLPQYRKSDAQIVEMPTNCPVCDSKIENVNDQAIYRCTGGWHCQAQTTERLKHFVSRKAMDIDKLGAKLIEQLVAANLIKYPADIYKLNFEQLTGLERMAAKSSQNVLDSITKSKEPSLARFIFAIGIKDIGEVSSDALANHFGSLESFRDAKFEELIEINYVGEIIANNIVSFWHDSLNIKIVEEFLAIGIKIQNPVKVEHAYNESFTGKTVVITGSFENYGRTELTQLLKSIGAKVTSSVSKKTDMVICGDNAGSKLTKAQELGVEVILEDNLKDLL.

Residues 47–51, 96–97, and Glu-122 contribute to the NAD(+) site; these read DSDYD and SL. Residue Lys-124 is the N6-AMP-lysine intermediate of the active site. Residues Arg-145, Glu-182, Lys-300, and Lys-324 each contribute to the NAD(+) site. Zn(2+)-binding residues include Cys-418, Cys-421, Cys-436, and Cys-442. Positions 602-678 constitute a BRCT domain; sequence AYNESFTGKT…ILEDNLKDLL (77 aa).

It belongs to the NAD-dependent DNA ligase family. LigA subfamily. Mg(2+) is required as a cofactor. It depends on Mn(2+) as a cofactor.

The enzyme catalyses NAD(+) + (deoxyribonucleotide)n-3'-hydroxyl + 5'-phospho-(deoxyribonucleotide)m = (deoxyribonucleotide)n+m + AMP + beta-nicotinamide D-nucleotide.. DNA ligase that catalyzes the formation of phosphodiester linkages between 5'-phosphoryl and 3'-hydroxyl groups in double-stranded DNA using NAD as a coenzyme and as the energy source for the reaction. It is essential for DNA replication and repair of damaged DNA. This Francisella tularensis subsp. holarctica (strain OSU18) protein is DNA ligase.